A 70-amino-acid polypeptide reads, in one-letter code: Putative ankyrin repeat protein RC0502 (70 aa).

The ANK repeat unit spans residues 9 to 43 (KGRIPIHYATYSKQHEITQILILLQPGSEIDTVDN).

This is Putative ankyrin repeat protein RC0502 from Rickettsia conorii (strain ATCC VR-613 / Malish 7).